The primary structure comprises 245 residues: Ribosome maturation factor RimP (245 aa).

This sequence belongs to the RimP family.

Its subcellular location is the cytoplasm. Required for maturation of 30S ribosomal subunits. The sequence is that of Ribosome maturation factor RimP from Verminephrobacter eiseniae (strain EF01-2).